A 317-amino-acid polypeptide reads, in one-letter code: Methionyl-tRNA formyltransferase (317 aa).

109-112 (SLLP) serves as a coordination point for (6S)-5,6,7,8-tetrahydrofolate.

This sequence belongs to the Fmt family.

It catalyses the reaction L-methionyl-tRNA(fMet) + (6R)-10-formyltetrahydrofolate = N-formyl-L-methionyl-tRNA(fMet) + (6S)-5,6,7,8-tetrahydrofolate + H(+). Its function is as follows. Attaches a formyl group to the free amino group of methionyl-tRNA(fMet). The formyl group appears to play a dual role in the initiator identity of N-formylmethionyl-tRNA by promoting its recognition by IF2 and preventing the misappropriation of this tRNA by the elongation apparatus. This is Methionyl-tRNA formyltransferase from Desulforamulus reducens (strain ATCC BAA-1160 / DSM 100696 / MI-1) (Desulfotomaculum reducens).